The chain runs to 415 residues: MKLSLTKVVNGCRLGKIKNLGKTGDHTMDIPGCLLYTKTGSAPHLTHHTLHNIHGVPAMAQLTLSSLAEHHEVLTEYKEGVGKFIGMPESLLYCSLHDPVSPCPAGYVTNKSVSVWSVAGRVEMTVSKFMAIQKALQPDWFQCLSDGEVSCKEATSIKRVRKSVDRSLLFLDNCLRLQEESEVLQKSVIIGVIEGGDVMEERLRSARETAKRPVGGFLLDGFQGNPTTLEARLRLLSSVTAELPEDKPRLISGVSRPDEVLECIERGVDLFESFFPYQVTERGCALTFSFDYQPNPEETLLQQNGTQEEIKCMDQIKKIETTGCNQEITSFEINLKEKKYQEDFNPLVRGCSCYCCKNHTRAYIHHLLVTNELLAGVLLMMHNFEHYFGFFHYIREALKSDKLAQLKELIHRQAS.

Zn(2+) is bound by residues cysteine 351, cysteine 353, cysteine 356, and histidine 382.

It belongs to the queuine tRNA-ribosyltransferase family. QTRT2 subfamily. As to quaternary structure, heterodimer of a catalytic subunit QTRT1 and an accessory subunit QTRT2. The cofactor is Zn(2+).

It localises to the cytoplasm. The protein localises to the mitochondrion outer membrane. In terms of biological role, non-catalytic subunit of the queuine tRNA-ribosyltransferase (TGT) that catalyzes the base-exchange of a guanine (G) residue with queuine (Q) at position 34 (anticodon wobble position) in tRNAs with GU(N) anticodons (tRNA-Asp, -Asn, -His and -Tyr), resulting in the hypermodified nucleoside queuosine (7-(((4,5-cis-dihydroxy-2-cyclopenten-1-yl)amino)methyl)-7-deazaguanosine). In Homo sapiens (Human), this protein is Queuine tRNA-ribosyltransferase accessory subunit 2.